The sequence spans 66 residues: Large ribosomal subunit protein uL29 (66 aa).

This sequence belongs to the universal ribosomal protein uL29 family.

The protein is Large ribosomal subunit protein uL29 of Roseiflexus castenholzii (strain DSM 13941 / HLO8).